The following is a 791-amino-acid chain: Cullin-2 (791 aa).

In terms of domain architecture, Cullin neddylation spans 722–784 (DRKYYMECAI…KMYIQRTDQN (63 aa)). K736 is covalently cross-linked (Glycyl lysine isopeptide (Lys-Gly) (interchain with G-Cter in NEDD8)).

Belongs to the cullin family. In terms of assembly, component of multiple CBC (Cul2-ElonginB-ElonginC) E3 ubiquitin-protein ligase complexes formed of cul-2, elb-1, elc-1, rbx-1 and a variable substrate recognition component. Component of the CBC(fem-1) E3 ubiquitin-protein ligase complex with fem-1, fem-2 and fem-3. The CBC(fem-1) complex interacts with tra-1 and promotes tra-1 degradation. Probable component of the CBC(lrr-1) E3 ubiquitin-protein ligase complex incuding cul-2, elb-1, elc-1, rbx-1 and lrr-1. The CBC(lrr-1) complex interacts with the DNA replisome complex at the end of S phase; the interaction promotes the release of components of the CMG helicase complex (a component of the replisome) from chromatin. Probable component of an CBC(zif-1) E3 ubiquitin-protein ligase including cul-2, elc-1, rbx-1 and zif-1. Part of an E3 ubiquitin-protein ligase complex including cul-2, elc-1 and zyg-11. Interacts with Skp1-related protein skr-10. Post-translationally, neddylated; which enhances the ubiquitination activity of CBC (Cul2-ElonginB-ElonginC) E3 ubiquitin-protein ligase complexes. In terms of tissue distribution, in adults, highly expressed in meiotic cells and oocytes. In larvae, expressed in many proliferating cell types: P cells during the L1 stage; seam cells when they divide at every molt; vulval and somatic gonad cells in late L3 and L4 stages; and intestinal cells throughout larval development.

The protein resides in the cytoplasm. The protein localises to the nucleus. The protein operates within protein modification; protein ubiquitination. Functionally, core component of multiple cullin-RING-based CBC (Cul2-ElonginB-ElonginC) E3 ubiquitin-protein ligase complexes which mediate the ubiquitination and subsequent proteasomal degradation of target proteins. As a scaffold protein may contribute to catalysis through positioning of the substrate and the ubiquitin-conjugating enzyme. The functional specificity of the CBC complex depends on the variable substrate recognition component. May function in ubiquitin-mediated degradation of CKIs to target cki-1 for degradation. CBC(zif-1) may ensure germline precursor cell asymmetry by targeting germline proteins for destruction if expressed in non-germline cells. As part of the CBC(fem-1) complex directs ubiquitination of tra-1. As part of the CBC(lrr-1) complex, required for the ubiquitination and dissasembly of the CMG helicase complex from chromatin at the end of DNA replication. Positive cell-cycle regulator that is required at two distinct points in the cell cycle; the G1-to-S-phase transition and mitosis. Also required for proper cytoskeletal movement and mitotic chromosome condensation. In Caenorhabditis elegans, this protein is Cullin-2.